Reading from the N-terminus, the 332-residue chain is Long form salivary protein D7L1 (332 aa).

An N-terminal signal peptide occupies residues 1-21 (MHSPKSFLLLAVVFVALRVTA). 2 cysteine pairs are disulfide-bonded: Cys-40–Cys-77 and Cys-73–Cys-133. Residue Trp-61 coordinates leukotriene E4. A leukotriene E4-binding site is contributed by Lys-176. 3 cysteine pairs are disulfide-bonded: Cys-184–Cys-219, Cys-200–Cys-331, and Cys-259–Cys-278. Noradrenaline-binding residues include Glu-185 and Arg-203. Residues Asp-294 and Glu-297 each coordinate noradrenaline.

The protein belongs to the PBP/GOBP family. Female mosquito salivary gland (at protein level).

Its subcellular location is the secreted. Modulates blood feeding of female mosquitoes on vertebrate species by binding and sequestering different mediators involved in the host response, such as biogenic amines and eicosanoids. Binds dopamine, serotonin, histamine, tryptamine, adrenaline, noradrenaline, leukotriene B4, leukotriene C4, leukotriene D4, leukotriene E4 and U-46619, a stable analog of thromboxane A2. Inhibits platelet aggregation induced by serotonin and low doses of thromboxane A2 analog U-46619 but not by high doses of U-46619, collagen or ADP. Prevents leukocyte recruitment. This Aedes albopictus (Asian tiger mosquito) protein is Long form salivary protein D7L1.